The sequence spans 1556 residues: Bromodomain adjacent to zinc finger domain protein 1A (1556 aa).

The tract at residues 1–128 (MPLLHRKPFV…EETVEVIRNN (128 aa)) is required for interaction with the CHRAC1-POLE3 heterodimer. Required for interaction with the CHRAC1-POLE3 heterodimer. The tract at residues 1–133 (MPLLHRKPFV…VIRNNGARLQ (133 aa)) is required for interaction with NCOR1. In terms of domain architecture, WAC spans 22–128 (EEVFYCKVTN…EETVEVIRNN (107 aa)). A Phosphoserine modification is found at serine 270. Residues 306–397 (KERDKLLKQE…YVEYLKQWSK (92 aa)) are a coiled coil. The DDT domain occupies 422 to 487 (PEIFGDALMV…LTAIFQAIAE (66 aa)). Positions 634–709 (IEDYVDILRQ…DISIGEEERE (76 aa)) form a coiled coil. The segment covering 662 to 695 (EAAARIRKRKEEKLKEQEQKMKEKQEKLKEDEQR) has biased composition (basic and acidic residues). 3 disordered regions span residues 662 to 754 (EAAA…NGFK), 841 to 877 (PSSF…GPRD), and 941 to 966 (FHFS…AYDP). The tract at residues 667–933 (IRKRKEEKLK…QEKSRICAQL (267 aa)) is required for interaction with SMARCA5 and formation of the CHRAC ISWI chromatin remodeling complex. Position 702 is a phosphoserine (serine 702). Over residues 703–713 (IGEEEREDFDT) the composition is skewed to acidic residues. Over residues 715–726 (IESKDTEQKELD) the composition is skewed to basic and acidic residues. Positions 727–736 (QDMVTEDEDD) are enriched in acidic residues. Residue threonine 731 is modified to Phosphothreonine. Polar residues-rich tracts occupy residues 842–872 (SSFQ…SNID) and 951–965 (SKPT…NAYD). Lysine 952 participates in a covalent cross-link: Glycyl lysine isopeptide (Lys-Gly) (interchain with G-Cter in SUMO2). A phosphoserine mark is found at serine 960 and serine 961. Residues 1148–1198 (NARCKICRKKGDAENMVLCDGCDRGHHTYCVRPKLKTVPEGDWFCPECRPK) form a PHD-type zinc finger. Disordered stretches follow at residues 1202 to 1376 (RRLS…NFPN) and 1399 to 1431 (LQES…RQGG). Positions 1213-1258 (ESDEDVEDSMGGEDDEVDGDEEEGQSEEEEYEVEQDEDDSQEEEEV) are enriched in acidic residues. Residues 1262 to 1276 (KRGRPQVRLPVKTRG) show a composition bias toward basic residues. Polar residues predominate over residues 1277 to 1312 (KLSSSFSSRGQQQEPGRYPSRSQQSTPKTTVSSKTG). Residues serine 1281, serine 1320, serine 1339, serine 1353, serine 1363, serine 1371, serine 1402, serine 1413, and serine 1417 each carry the phosphoserine modification. Residues 1363–1374 (SANNTPENSPNF) are compositionally biased toward polar residues. The 104-residue stretch at 1430-1533 (GGVHELSAFE…AFFHIQAQKL (104 aa)) folds into the Bromo domain. Threonine 1547 bears the Phosphothreonine mark.

It belongs to the WAL family. Component of the ACF-1 ISWI chromatin remodeling complex at least composed of SMARCA1 and BAZ1A, which regulates the spacing of histone octamers on the DNA template to facilitate access to DNA. Within the ACF-1 ISWI chromatin remodeling complex interacts with SMARCA1; the interaction is direct. Component of the ACF-5 ISWI chromatin remodeling complex (also called the ACF complex) at least composed of BAZ1A and SMARCA5/SNF2H, which regulates the spacing of histone octamers on the DNA template to facilitate access to DNA. Within the ACF-5 ISWI chromatin remodeling complex interacts with SMARCA5/SNF2H; the interaction is direct. Component of the CHRAC ISWI chromatin remodeling complex at least composed of SMARCA5/SNF2H, BAZ1A/ACF1, CHRAC1 and POLE3; the complex preferentially binds DNA through the CHRAC1-POLE3 heterodimer and possesses ATP-dependent nucleosome-remodeling activity. Within the complex interacts (via N-terminus) with POLE3-CHRAC1 heterodimer; the interaction is direct and is required for the complex to preferentially bind to DNA. Within the complex interacts with SMARCA5/SNF2H; the interaction is direct and promotes the interaction with the POLE3-CHRAC1 heterodimer. Interacts with NCOR1 (via its RD1 domain); the interaction corepresses a number of NCOR1-regulated genes. In terms of tissue distribution, highly expressed in testis and at low or undetectable levels in other tissues analyzed.

Its subcellular location is the nucleus. In terms of biological role, regulatory subunit of the ATP-dependent ACF-1 and ACF-5 ISWI chromatin remodeling complexes, which form ordered nucleosome arrays on chromatin and slide edge- and center-positioned histone octamers away from their original location on the DNA template to facilitate access to DNA during DNA-templated processes such as DNA replication, transcription, and repair. Both complexes regulate the spacing of nucleosomes along the chromatin and have the ability to slide mononucleosomes to the center of a DNA template in an ATP-dependent manner. The ACF-1 ISWI chromatin remodeling complex has a lower ATP hydrolysis rate than the ACF-5 ISWI chromatin remodeling complex. Has a role in sensing the length of DNA which flank nucleosomes, which modulates the nucleosome spacing activity of the ACF-5 ISWI chromatin remodeling complex. Involved in DNA replication and together with SMARCA5/SNF2H is required for replication of pericentric heterochromatin in S-phase. May have a role in nuclear receptor-mediated transcription repression. This Homo sapiens (Human) protein is Bromodomain adjacent to zinc finger domain protein 1A (BAZ1A).